The chain runs to 260 residues: MAKEWGYASHNGPEHWHELYPIAKGDNQSPIELHTKDIRHDPSLQPWSVSYDPGSAKTILNNGKTCRVVFDDTFDRSMLRGGPLSGPYRLRQFHLHWGSSDDHGSEHTVDGVKYAAELHLVHWNPKYNTFGEALKQPDGIAVVGIFLKIGREKGEFQILLDALDKIKTKGKEAPFNHFDPSCLFPACRDYWTYHGSFTTPPCEECIVWLLLKEPMTVSSDQMAKLRSLFASAENEPPVPLVGNWRPPQPIKGRVVRASFK.

The residue at position 2 (alanine 2) is an N-acetylalanine. The Alpha-carbonic anhydrase domain occupies 3 to 259 (KEWGYASHNG…IKGRVVRASF (257 aa)). 5 positions are modified to phosphoserine: serine 29, serine 43, serine 48, serine 50, and serine 55. Positions 64 to 67 (KTCR) are involved in proton transfer. Threonine 73 carries the phosphothreonine modification. Zn(2+)-binding residues include histidine 94, histidine 96, and histidine 119. At tyrosine 127 the chain carries Phosphotyrosine. Position 129 is a phosphothreonine (threonine 129). S-glutathionyl cysteine occurs at positions 182 and 187. Residue 198 to 199 (TT) participates in substrate binding. Threonine 216 is modified (phosphothreonine). Phosphoserine is present on serine 219.

This sequence belongs to the alpha-carbonic anhydrase family. Zn(2+) serves as cofactor. S-thiolated both by thiol-disulfide exchange with glutathione disulfide and by oxyradical-initiated S-thiolation with reduced glutathione. Post-translationally, S-glutathionylated in hepatocytes under oxidative stress. In terms of tissue distribution, expressed in liver and muscle.

The protein resides in the cytoplasm. The enzyme catalyses hydrogencarbonate + H(+) = CO2 + H2O. Inhibited by acetazolamide. Its function is as follows. Reversible hydration of carbon dioxide. This Rattus norvegicus (Rat) protein is Carbonic anhydrase 3 (Ca3).